The sequence spans 215 residues: Sodium channel regulatory subunit beta-3 (215 aa).

A signal peptide spans 1–24 (MPAFNRLLPLASLVLIYWVRVCFP). The Ig-like C2-type domain maps to 25–138 (VCVEVPSETE…EAHRPFVKTT (114 aa)). The Extracellular segment spans residues 25-156 (VCVEVPSETE…EEAGEDFTSV (132 aa)). 2 disulfide bridges follow: Cys-26–Cys-48 and Cys-45–Cys-120. Residues Asn-95, Asn-109, Asn-113, and Asn-121 are each glycosylated (N-linked (GlcNAc...) asparagine). Residues 157–178 (VSEIMMYILLVFLTLWLFIEMI) traverse the membrane as a helical segment. Residues 179–215 (YCYRKVSKAEEAAQENASDYLAIPSENKENSVVPVEE) lie on the Cytoplasmic side of the membrane.

Belongs to the sodium channel auxiliary subunit SCN3B (TC 8.A.17) family. A voltage-gated sodium (Nav) channel consists of an ion-conducting pore-forming alpha subunit functional on its own that is regulated by one or more beta subunits. Forms homodimers and homotrimers. SCN3B is non-covalently associated with alpha subunits and induces the formation of alpha subunit oligomers, including trimers. Interacts with SCN5A/Nav1.5; regulatory subunit of SCN5A/Nav1.5. Interacts with SCN7A/Nav2.1; probable regulatory subunit of SCN7A/Nav2.1. Interacts with SCN10A; regulatory subunit of SCN10A/Nav1.8. Interacts with NFASC; probably involved in targeting the sodium channels to the nodes of Ranvier. In terms of processing, intramolecular disulfide bonds favor the voltage-gated sodium channel oligomeric complex assembly. Post-translationally, N-glycosylated.

It is found in the cell membrane. In terms of biological role, regulatory subunit of multiple voltage-gated sodium (Nav) channels directly mediating the depolarization of excitable membranes. Navs, also called VGSCs (voltage-gated sodium channels) or VDSCs (voltage-dependent sodium channels), operate by switching between closed and open conformations depending on the voltage difference across the membrane. In the open conformation they allow Na(+) ions to selectively pass through the pore, along their electrochemical gradient. The influx of Na+ ions provokes membrane depolarization, initiating the propagation of electrical signals throughout cells and tissues. The accessory beta subunits participate in localization and functional modulation of the Nav channels. Modulates the activity of SCN2A/Nav1.2, causing a hyperpolarizing shift in the voltage-dependence of inactivation of the channel and increasing the fraction of channels operating in the fast gating mode. Modulates the activity of SCN5A/Nav1.5. Could also regulate the atypical sodium channel SCN7A/Nav2.1. Modulates the activity of SCN10A/Nav1.8, regulating its oligomerization and accelerating the recovery from inactivation. This Mus musculus (Mouse) protein is Sodium channel regulatory subunit beta-3.